The chain runs to 635 residues: Threonine--tRNA ligase (635 aa).

In terms of domain architecture, TGS spans 1 to 61 (MINISFPDGS…ENDCKLRILT (61 aa)). The segment at 242-533 (DHRKLGKELD…LIEEYAGCFP (292 aa)) is catalytic. Zn(2+) contacts are provided by Cys333, His384, and His510.

It belongs to the class-II aminoacyl-tRNA synthetase family. Homodimer. Zn(2+) serves as cofactor.

Its subcellular location is the cytoplasm. It catalyses the reaction tRNA(Thr) + L-threonine + ATP = L-threonyl-tRNA(Thr) + AMP + diphosphate + H(+). Catalyzes the attachment of threonine to tRNA(Thr) in a two-step reaction: L-threonine is first activated by ATP to form Thr-AMP and then transferred to the acceptor end of tRNA(Thr). Also edits incorrectly charged L-seryl-tRNA(Thr). This is Threonine--tRNA ligase from Rickettsia akari (strain Hartford).